Here is a 514-residue protein sequence, read N- to C-terminus: Probable outer membrane protein pmp12 (514 aa).

Positions 1-21 are cleaved as a signal peptide; it reads MTILRNFLTCSALFLALPAAA.

Belongs to the PMP outer membrane protein family.

The protein localises to the secreted. Its subcellular location is the cell wall. It localises to the cell outer membrane. The sequence is that of Probable outer membrane protein pmp12 (pmp12) from Chlamydia pneumoniae (Chlamydophila pneumoniae).